A 441-amino-acid chain; its full sequence is FAM10 family protein At4g22670 (441 aa).

A disordered region spans residues 41–114 (KIPTGVHEED…PQKMGDSSVE (74 aa)). Residues 46–55 (VHEEDKDTKP) are compositionally biased toward basic and acidic residues. Composition is skewed to acidic residues over residues 61-71 (EESDDDMDETE) and 78-102 (EEEEEEDEIVESDVELEGDTVEPDN). 2 positions are modified to phosphoserine: serine 63 and serine 89. TPR repeat units follow at residues 121–156 (EAAQEAKGKAMEALSEGNFDEAIEHLTRAITLNPTS), 158–190 (IMYGNRASVYIKLKKPNAAIRDANAALEINPDS), and 191–224 (AKGYKSRGMARAMLGEWAEAAKDLHLASTIDYDE). The stretch at 236–285 (NAHKLEEHRRKYDRLRKEREDKKAERDRLRRRAEAQAAYDKAKKEEQSSS) forms a coiled coil. Basic and acidic residues predominate over residues 244–282 (RRKYDRLRKEREDKKAERDRLRRRAEAQAAYDKAKKEEQ). A disordered region spans residues 244–314 (RRKYDRLRKE…MPGGFPGGMG (71 aa)). Gly residues predominate over residues 289–314 (SGGGFPGGMPGGFPGGMPGGFPGGMG). Positions 391-430 (DPELMTAFSDPEVMAALQDVMKNPANLAKHQANPKVAPVI) constitute an STI1 domain.

The protein belongs to the FAM10 family.

The sequence is that of FAM10 family protein At4g22670 from Arabidopsis thaliana (Mouse-ear cress).